A 230-amino-acid polypeptide reads, in one-letter code: Lecithin retinol acyltransferase (230 aa).

Over 1 to 194 the chain is Cytoplasmic; the sequence is MKNPMLEAVS…VKIIIRDQRS (194 aa). In terms of domain architecture, LRAT spans 50–177; sequence VLEVPRTHLT…CRYGTPISPQ (128 aa). Catalysis depends on residues His60 and His72. Cys161 functions as the Acyl-thioester intermediate in the catalytic mechanism. Residues 195 to 215 traverse the membrane as a helical segment; it reads VLASAVLGLASIFCLGLTSYT. Residues 216-230 are Lumenal-facing; sequence TLPAIFIPFLLWMAG.

This sequence belongs to the H-rev107 family.

The protein resides in the endoplasmic reticulum membrane. Its subcellular location is the rough endoplasmic reticulum. It is found in the endosome. It localises to the multivesicular body. The protein localises to the cytoplasm. The protein resides in the perinuclear region. The catalysed reaction is all-trans-retinol--[retinol-binding protein] + a 1,2-diacyl-sn-glycero-3-phosphocholine = apo--[retinol-binding protein] + an all-trans-retinyl ester + a 2-acyl-sn-glycero-3-phosphocholine. It carries out the reaction 1,2-dihexadecanoyl-sn-glycero-3-phosphocholine + all-trans-retinol = all-trans-retinyl hexadecanoate + 2-hexadecanoyl-sn-glycero-3-phosphocholine. It catalyses the reaction 1,2-diheptanoyl-sn-glycero-3-phosphocholine + all-trans-retinol--[retinol-binding protein] = all-trans-retinyl heptanoate + 2-heptanoyl-sn-glycero-3-phosphocholine + apo--[retinol-binding protein]. The enzyme catalyses 1,2-dioctanoyl-sn-glycero-3-phosphocholine + all-trans-retinol--[retinol-binding protein] = 2-octanoyl-sn-glycero-3-phosphocholine + all-trans-retinyl octanoate + apo--[retinol-binding protein]. The catalysed reaction is all-trans-retinol--[retinol-binding protein] + 1,2-dihexadecanoyl-sn-glycero-3-phosphocholine = apo--[retinol-binding protein] + all-trans-retinyl hexadecanoate + 2-hexadecanoyl-sn-glycero-3-phosphocholine. It carries out the reaction 1,2-didodecanoyl-sn-glycero-3-phosphocholine + all-trans-retinol--[retinol-binding protein] = 2-dodecanoyl-sn-glycero-3-phosphocholine + all-trans-retinyl dodecanoate + apo--[retinol-binding protein]. Its pathway is cofactor metabolism; retinol metabolism. With respect to regulation, inhibited by all-trans-retinyl alpha-bromoacetate and N-boc-L-biocytinyl-11-aminoundecane chloro-methyl ketone (BACMK). Transfers the acyl group from the sn-1 position of phosphatidylcholine to all-trans retinol, producing all-trans retinyl esters. Retinyl esters are storage forms of vitamin A. LRAT plays a critical role in vision. It provides the all-trans retinyl ester substrates for the isomerohydrolase which processes the esters into 11-cis-retinol in the retinal pigment epithelium; due to a membrane-associated alcohol dehydrogenase, 11 cis-retinol is oxidized and converted into 11-cis-retinaldehyde which is the chromophore for rhodopsin and the cone photopigments. Required for the survival of cone photoreceptors and correct rod photoreceptor cell morphology. In Bos taurus (Bovine), this protein is Lecithin retinol acyltransferase (LRAT).